Consider the following 280-residue polypeptide: 3-hydroxyacyl-thioester dehydratase X (280 aa).

The tract at residues 149-170 is disordered; the sequence is QRTSLSGEPKPPPQKKPKLPPP. In terms of domain architecture, MaoC-like spans 162-256; sequence QKKPKLPPPA…TAGLYVAEGD (95 aa).

The protein belongs to the enoyl-CoA hydratase/isomerase family.

The enzyme catalyses a (3R)-3-hydroxyacyl-CoA = a (2E)-enoyl-CoA + H2O. The catalysed reaction is (2E)-octenoyl-CoA + H2O = (3R)-hydroxyoctanoyl-CoA. It carries out the reaction (3R)-3-hydroxydodecanoyl-CoA = (2E)-dodecenoyl-CoA + H2O. It catalyses the reaction (3R)-hydroxyhexadecanoyl-CoA = (2E)-hexadecenoyl-CoA + H2O. The enzyme catalyses (3R)-hydroxyeicosanoyl-CoA = (2E)-eicosenoyl-CoA + H2O. The catalysed reaction is (3R)-3-hydroxybutanoyl-CoA = (2E)-butenoyl-CoA + H2O. In terms of biological role, shows trans-enoyl-CoA hydratase/3-hydroxyacyl-CoA dehydratase activity. Displays a broad chain length specificity, with a predilection for the C8 to C12 substrates. This chain is 3-hydroxyacyl-thioester dehydratase X, found in Mycobacterium tuberculosis (strain ATCC 25618 / H37Rv).